The chain runs to 495 residues: 3-octaprenyl-4-hydroxybenzoate carboxy-lyase (495 aa).

Asparagine 172 serves as a coordination point for Mn(2+). Prenylated FMN is bound by residues 175 to 177 (IYR), 189 to 191 (RWL), and 194 to 195 (RG). Glutamate 238 contacts Mn(2+). Catalysis depends on aspartate 287, which acts as the Proton donor.

It belongs to the UbiD family. Homohexamer. The cofactor is prenylated FMN. It depends on Mn(2+) as a cofactor.

It localises to the cell membrane. It carries out the reaction a 4-hydroxy-3-(all-trans-polyprenyl)benzoate + H(+) = a 2-(all-trans-polyprenyl)phenol + CO2. It participates in cofactor biosynthesis; ubiquinone biosynthesis. Its function is as follows. Catalyzes the decarboxylation of 3-octaprenyl-4-hydroxy benzoate to 2-octaprenylphenol, an intermediate step in ubiquinone biosynthesis. This is 3-octaprenyl-4-hydroxybenzoate carboxy-lyase from Yersinia pestis bv. Antiqua (strain Angola).